A 149-amino-acid polypeptide reads, in one-letter code: Arginine repressor (149 aa).

Belongs to the ArgR family.

Its subcellular location is the cytoplasm. It functions in the pathway amino-acid biosynthesis; L-arginine biosynthesis [regulation]. The protein operates within amino-acid degradation; L-arginine degradation via ADI pathway. Regulates arginine biosynthesis genes and activates arginine deiminase pathway genes. This Bacillus licheniformis (strain ATCC 14580 / DSM 13 / JCM 2505 / CCUG 7422 / NBRC 12200 / NCIMB 9375 / NCTC 10341 / NRRL NRS-1264 / Gibson 46) protein is Arginine repressor (argR).